The sequence spans 309 residues: Lactamase-like protein aptB (309 aa).

4 residues coordinate Zn(2+): His97, His99, Asp101, and His102. Residue Asp101 is the Proton donor/acceptor of the active site.

The protein belongs to the metallo-beta-lactamase superfamily. Zn(2+) serves as cofactor.

It catalyses the reaction 2,3,6,8,9-pentahydroxy-1-oxo-3-(2-oxopropyl)-1,2,3,4-tetrahydroanthracene-2-carboxyl-[ACP] + H2O = 2,3,6,8,9-pentahydroxy-1-oxo-3-(2-oxopropyl)-1,2,3,4-tetrahydroanthracene-2-carboxylate + holo-[ACP] + H(+). The protein operates within secondary metabolite biosynthesis. In terms of biological role, lactamase-like protein; part of the gene cluster that mediates the biosynthesis of asperthecin, an anthraquinone pigment. Polyketide synthase (PKS) aptA catalyzes the formation of the aromatic polyketide from acetyl coenzyme A and seven malonyl coenzyme A molecules. Polyketide is subsequently hydrolyzed by the action of aptB into endocrocin-9-anthrone. Endocrocin-9-anthrone is then oxidized into endocrocin by aptC. Endocrocin is likely to decarboxylate spontaneously to form emodin which explains why there is no decarboxylase in the asperthecin biosynthesis cluster. Finally, aptC or another endogenous oxygenase catalyzes additional oxidation steps to form asperthecin. In Emericella nidulans (strain FGSC A4 / ATCC 38163 / CBS 112.46 / NRRL 194 / M139) (Aspergillus nidulans), this protein is Lactamase-like protein aptB.